The following is a 530-amino-acid chain: 5-aminolevulinate synthase, mitochondrial (530 aa).

The transit peptide at 1–26 (MFRPVLKVRPSFSYPYSIVSSRSVRL) directs the protein to the mitochondrion. Substrate contacts are provided by R73, S186, and K205. 3 residues coordinate pyridoxal 5'-phosphate: S238, H266, and T316. Residue K319 is part of the active site. At K319 the chain carries N6-(pyridoxal phosphate)lysine. Pyridoxal 5'-phosphate contacts are provided by T348 and T349. T434 is a substrate binding site.

This sequence belongs to the class-II pyridoxal-phosphate-dependent aminotransferase family. In terms of assembly, homodimer. It depends on pyridoxal 5'-phosphate as a cofactor.

The protein resides in the mitochondrion matrix. It carries out the reaction succinyl-CoA + glycine + H(+) = 5-aminolevulinate + CO2 + CoA. The protein operates within porphyrin-containing compound metabolism; protoporphyrin-IX biosynthesis; 5-aminolevulinate from glycine: step 1/1. Its function is as follows. Catalyzes the synthesis of 5-aminolevulinate (ALA) from succinyl-CoA and glycine, the first and rate-limiting step in heme biosynthesis. In Candida glabrata (strain ATCC 2001 / BCRC 20586 / JCM 3761 / NBRC 0622 / NRRL Y-65 / CBS 138) (Yeast), this protein is 5-aminolevulinate synthase, mitochondrial (HEM1).